A 391-amino-acid polypeptide reads, in one-letter code: MSIVRMTDLDLSGKRVLIRQDLNVPIDNGQITSEQRITASVPTIKLALEKGAAVMVTSHLGRPKEGSWTEEDSLAPVATRLAALLGVDVPLVRDWVDGVDVAPGQVVLLENCRMNVGEGKDDETLARKYAALCDVFVMDAFGTAHRAQASTHGVIRFAPVAAGGPLLMAELDALAKALDNPAKPLLAIVAGSKVSTKLELLSNLVNKVDQLIVGGGIANTFIAAAGHAVGKSLNEPDLIPTANQIVADAKARGAEIPLPTDVVVAKQFLPDAQASVKSLDAVDADDLILDIGPHTAQRYAELIASAGTVVWNGPVGVFEFESFSHGTETLARAIASSKAFSIAGGGDTLAAVDKYDIAQEVTYISTGGGAFLEFLEGKTLPAVAALQARGQ.

Residues 21–23 (DLN), Arg36, 59–62 (HLGR), Arg113, and Arg146 each bind substrate. ATP is bound by residues Lys197, Glu319, and 345–348 (GGDT).

It belongs to the phosphoglycerate kinase family. As to quaternary structure, monomer.

The protein resides in the cytoplasm. The enzyme catalyses (2R)-3-phosphoglycerate + ATP = (2R)-3-phospho-glyceroyl phosphate + ADP. It functions in the pathway carbohydrate degradation; glycolysis; pyruvate from D-glyceraldehyde 3-phosphate: step 2/5. This is Phosphoglycerate kinase from Xanthomonas euvesicatoria pv. vesicatoria (strain 85-10) (Xanthomonas campestris pv. vesicatoria).